Reading from the N-terminus, the 88-residue chain is Small ribosomal subunit protein bS20 (88 aa).

The interval 1-26 (MANTAQARKRARQNTKRRQNSASQRS) is disordered. Positions 7–19 (ARKRARQNTKRRQ) are enriched in basic residues.

Belongs to the bacterial ribosomal protein bS20 family.

Functionally, binds directly to 16S ribosomal RNA. This Psychrobacter cryohalolentis (strain ATCC BAA-1226 / DSM 17306 / VKM B-2378 / K5) protein is Small ribosomal subunit protein bS20.